The sequence spans 110 residues: Ubiquitin-related modifier 1 (110 aa).

Gly-110 is modified (1-thioglycine). Gly-110 participates in a covalent cross-link: Glycyl lysine isopeptide (Gly-Lys) (interchain with K-? in acceptor proteins).

Belongs to the URM1 family. Homodimer; homodimerization may provide an autoprotection to the highly active C-terminal residue before attacking its substrates. Forms a conjugate with the target protein AHP1. Post-translationally, C-terminal thiocarboxylation occurs in 2 steps, it is first acyl-adenylated (-COAMP) via the hesA/moeB/thiF part of UBA4, then thiocarboxylated (-COSH) via the rhodanese domain of UBA4.

It is found in the cytoplasm. It functions in the pathway tRNA modification; 5-methoxycarbonylmethyl-2-thiouridine-tRNA biosynthesis. Functionally, acts as a sulfur carrier required for 2-thiolation of mcm(5)S(2)U at tRNA wobble positions of cytosolic tRNA(Lys), tRNA(Glu) and tRNA(Gln). Serves as sulfur donor in tRNA 2-thiolation reaction by being thiocarboxylated (-COSH) at its C-terminus by the MOCS3 homolog UBA4. The sulfur is then transferred to tRNA to form 2-thiolation of mcm(5)S(2)U. Prior mcm(5) tRNA modification by the elongator complex is required for 2-thiolation. Also acts as a ubiquitin-like protein (UBL) that is covalently conjugated via an isopeptide bond to lysine residues of target proteins such as AHP1. Conjugation does not depend on the canonical cascade of E2 ubiquitin-conjugating enzymes and/or E3 ligases. The conjugation reaction requires a thiocarboxylated C-terminus of URM1 and a peroxidatic cysteine in the target protein, as the sulfur atom of the URM1 thiocarboxyl group is transferred to redox-active cysteine residues in the target protein. Oxidative stress specifically induces the formation of UBL-protein conjugates. Covalent modification with URM1 promotes the phase separation of a wide range of proteins into condensates like stress granules. This is Ubiquitin-related modifier 1 from Chaetomium thermophilum (strain DSM 1495 / CBS 144.50 / IMI 039719) (Thermochaetoides thermophila).